A 369-amino-acid chain; its full sequence is S-adenosylmethionine:tRNA ribosyltransferase-isomerase (369 aa).

The protein belongs to the QueA family. Monomer.

It localises to the cytoplasm. It catalyses the reaction 7-aminomethyl-7-carbaguanosine(34) in tRNA + S-adenosyl-L-methionine = epoxyqueuosine(34) in tRNA + adenine + L-methionine + 2 H(+). Its pathway is tRNA modification; tRNA-queuosine biosynthesis. Its function is as follows. Transfers and isomerizes the ribose moiety from AdoMet to the 7-aminomethyl group of 7-deazaguanine (preQ1-tRNA) to give epoxyqueuosine (oQ-tRNA). This chain is S-adenosylmethionine:tRNA ribosyltransferase-isomerase, found in Acaryochloris marina (strain MBIC 11017).